Consider the following 1143-residue polypeptide: uncharacterized protein (1143 aa).

The N-terminal stretch at Met-1–Gly-20 is a signal peptide. The Extracellular segment spans residues Asn-21–Ala-1121. Residues Asn-177–Gly-203 are compositionally biased toward gly residues. Residues Asn-177 to Ser-1120 form a disordered region. The span at Ser-222 to Trp-236 shows a compositional bias: low complexity. The span at Ser-237–Ser-283 shows a compositional bias: gly residues. Residues Ser-284–Gly-296 show a composition bias toward low complexity. The span at Ser-297–Ser-330 shows a compositional bias: gly residues. Residues Ser-331–Trp-368 are compositionally biased toward low complexity. The segment covering Gly-374–Ser-392 has biased composition (gly residues). Over residues Ser-393–Gly-403 the composition is skewed to low complexity. Gly residues-rich tracts occupy residues Gly-404–Ser-418 and Gly-430–Ser-444. Low complexity-rich tracts occupy residues Ser-445–Gly-498 and Gly-506–Asp-541. Composition is skewed to gly residues over residues Gly-555–Ser-573, Gly-580–Ser-596, Gly-604–Ser-622, Gly-629–Ser-783, Gly-790–Ser-843, and Gly-851–Ser-905. Residues Gly-906 to Asn-1059 show a composition bias toward low complexity. Positions Ser-1062–Asp-1078 are enriched in polar residues. A compositionally biased stretch (low complexity) spans Pro-1094–Ala-1114. A helical membrane pass occupies residues Ile-1122–Val-1142. Ile-1143 is a topological domain (cytoplasmic).

It is found in the membrane. This is an uncharacterized protein from Dictyostelium discoideum (Social amoeba).